The chain runs to 404 residues: Argininosuccinate synthase (404 aa).

Position 9–17 (Ala9–Ser17) interacts with ATP. Tyr86 lines the L-citrulline pocket. Gly116 serves as a coordination point for ATP. The L-aspartate site is built by Thr118, Asn122, and Asp123. Residue Asn122 participates in L-citrulline binding. L-citrulline contacts are provided by Arg126, Ser174, Ser183, Glu259, and Tyr271.

The protein belongs to the argininosuccinate synthase family. Type 1 subfamily. As to quaternary structure, homotetramer.

Its subcellular location is the cytoplasm. It catalyses the reaction L-citrulline + L-aspartate + ATP = 2-(N(omega)-L-arginino)succinate + AMP + diphosphate + H(+). It participates in amino-acid biosynthesis; L-arginine biosynthesis; L-arginine from L-ornithine and carbamoyl phosphate: step 2/3. This chain is Argininosuccinate synthase, found in Listeria welshimeri serovar 6b (strain ATCC 35897 / DSM 20650 / CCUG 15529 / CIP 8149 / NCTC 11857 / SLCC 5334 / V8).